Here is a 494-residue protein sequence, read N- to C-terminus: Paired box protein Pax-2-B (494 aa).

Residues 15 to 141 constitute a DNA-binding region (paired); the sequence is RHGGVNQLGG…SSINRIIRTK (127 aa). A PAI subdomain region spans residues 18 to 74; it reads GVNQLGGVFVNGRPLPDVVRQRIVELAHQGVRPCDISRQLRVSHGCVSKILGRYYET. Positions 93 to 141 are RED subdomain; it reads KVVDKIADYKRQNPTMFAWEIRDRLLAEGICDNDTVPSVSSINRIIRTK. The interval 142–221 is disordered; the sequence is VQQPFHPTPD…GDSQSSVESL (80 aa). Low complexity predominate over residues 163-175; the sequence is VPSTASPPVSSAS.

Expression becomes spatially localized at mid-gastrula stages and is localized to the nervous system (midbrain, hindbrain, spinal cord), sensory organs (optic vesicle and stalk, otic vesicle), visceral arches, developing excretory system (pronephros, pronephric duct, rectal diverticulum, proctodaeum) and thryoid gland. Splicing does not appear to be tissue-specific.

It is found in the nucleus. In terms of biological role, probable transcription factor. Involved in kidney development, acting synergistically with lhx1/lim-1 in pronephric morphogenesis during the tailbud stages. The protein is Paired box protein Pax-2-B (pax2-b) of Xenopus laevis (African clawed frog).